A 434-amino-acid chain; its full sequence is Chaperone SurA (434 aa).

A signal peptide spans 1-22 (MKPSKHLIFALFALAISQPTMA). PpiC domains lie at 173–274 (DVEY…KIMD) and 283–383 (IEEV…QLEE).

It localises to the periplasm. The catalysed reaction is [protein]-peptidylproline (omega=180) = [protein]-peptidylproline (omega=0). In terms of biological role, chaperone involved in the correct folding and assembly of outer membrane proteins. Recognizes specific patterns of aromatic residues and the orientation of their side chains, which are found more frequently in integral outer membrane proteins. May act in both early periplasmic and late outer membrane-associated steps of protein maturation. This is Chaperone SurA from Shewanella oneidensis (strain ATCC 700550 / JCM 31522 / CIP 106686 / LMG 19005 / NCIMB 14063 / MR-1).